Here is a 577-residue protein sequence, read N- to C-terminus: ER degradation-enhancing alpha-mannosidase-like protein 2 (577 aa).

The signal sequence occupies residues 1–21; that stretch reads MPFRLLIPLGLVCVLLPLHHG. Asparagine 90, asparagine 112, asparagine 289, and asparagine 450 each carry an N-linked (GlcNAc...) asparagine glycan. Positions 513 to 561 are disordered; the sequence is PKRAQRKTVRSGPWEPQSGPATLSSPANQPREKQPAQQRTPLLSCPSQP. 2 stretches are compositionally biased toward polar residues: residues 531–540 and 547–561; these read GPATLSSPAN and PAQQ…PSQP.

Belongs to the glycosyl hydrolase 47 family. Post-translationally, N-glycosylated.

It is found in the endoplasmic reticulum lumen. Its function is as follows. Involved in the endoplasmic reticulum-associated degradation (ERAD) pathway that targets misfolded glycoproteins for degradation in an N-glycan-dependent manner. May initiate ERAD by promoting the first mannose trimming step of ERAD substrates, from Man9GlcNAc2 to Man8GlcNAc2. Seems to recognize and bind to exposed hydrophobic regions in target proteins. The polypeptide is ER degradation-enhancing alpha-mannosidase-like protein 2 (Mus musculus (Mouse)).